Here is a 103-residue protein sequence, read N- to C-terminus: Small ribosomal subunit protein uS10 (103 aa).

This sequence belongs to the universal ribosomal protein uS10 family. As to quaternary structure, part of the 30S ribosomal subunit.

Functionally, involved in the binding of tRNA to the ribosomes. The chain is Small ribosomal subunit protein uS10 from Blochmanniella pennsylvanica (strain BPEN).